The sequence spans 334 residues: MQRSLNEFLTPRTIEVNQINATHAKVTLEPLERGFGHTLGSALRRILLSSMPGCAVVEVEIDGVLHEYSTVEGVQEDVIEILLNLKNLAIKMHNRDEATLSLNKKGAGPVLASDIQLDHDVEIANPDMVICNLNSNGDVKMKLKVARGRGYEPADQRNSADDETRAIGRLQLDSSFSPVLRVAYNVESARVEQRTDLDKLVIDLETNGTIDPEEAIRRAATILQQQLAVFVDFDQQNEPEKVEEQEEIDPILLRPVDDLELTVRSANCLKAENIYYIGDLIQRTEVELLKTPNLGKKSLTEIKDVLASRGLSLGMRLENWPPASIRGDDRVLGG.

The tract at residues 1–234 (MQRSLNEFLT…QQLAVFVDFD (234 aa)) is alpha N-terminal domain (alpha-NTD). The alpha C-terminal domain (alpha-CTD) stretch occupies residues 248–334 (IDPILLRPVD…IRGDDRVLGG (87 aa)).

This sequence belongs to the RNA polymerase alpha chain family. In terms of assembly, homodimer. The RNAP catalytic core consists of 2 alpha, 1 beta, 1 beta' and 1 omega subunit. When a sigma factor is associated with the core the holoenzyme is formed, which can initiate transcription.

It catalyses the reaction RNA(n) + a ribonucleoside 5'-triphosphate = RNA(n+1) + diphosphate. In terms of biological role, DNA-dependent RNA polymerase catalyzes the transcription of DNA into RNA using the four ribonucleoside triphosphates as substrates. In Hahella chejuensis (strain KCTC 2396), this protein is DNA-directed RNA polymerase subunit alpha.